We begin with the raw amino-acid sequence, 92 residues long: Small ribosomal subunit protein uS19 (92 aa).

It belongs to the universal ribosomal protein uS19 family.

Functionally, protein S19 forms a complex with S13 that binds strongly to the 16S ribosomal RNA. The chain is Small ribosomal subunit protein uS19 from Paracoccus denitrificans (strain Pd 1222).